Here is a 314-residue protein sequence, read N- to C-terminus: Olfactory receptor 10T2 (314 aa).

The Extracellular segment spans residues 1 to 26 (MRGFNKTTVVTQFILVGFSSLGELQL). The N-linked (GlcNAc...) asparagine glycan is linked to N5. A helical transmembrane segment spans residues 27–47 (LLFVIFLLLYLTILVANVTIM). The Cytoplasmic segment spans residues 48-55 (AVIRFSWT). The chain crosses the membrane as a helical span at residues 56–76 (LHTPMYGFLFILSFSESCYTF). Residues 77-100 (VIIPQLLVHLLSDTKTISFMACAT) are Extracellular-facing. A disulfide bridge links C98 with C190. Residues 101–121 (QLFFFLGFACTNCLLIAVMGY) traverse the membrane as a helical segment. Over 122 to 140 (DRYVAICHPLRYTLIINKR) the chain is Cytoplasmic. A helical membrane pass occupies residues 141-161 (LGLELISLSGATGFFIALVAT). Over 162–198 (NLICDMRFCGPNRVNHYFCDMAPVIKLACTDTHVKEL) the chain is Extracellular. A helical transmembrane segment spans residues 199–218 (ALFSLSILVIMVPFLLILIS). Residues 219-237 (YGFIVNTILKIPSAEGKKA) are Cytoplasmic-facing. The chain crosses the membrane as a helical span at residues 238–258 (FVTCASHLTVVFVHYGCASII). Residues 259–271 (YLRPKSKSASDKD) are Extracellular-facing. A helical transmembrane segment spans residues 272-292 (QLVAVTYTVVTPLLNPLVYSL). Topologically, residues 293 to 314 (RNKEVKTALKRVLGMPVATKMS) are cytoplasmic.

This sequence belongs to the G-protein coupled receptor 1 family.

The protein localises to the cell membrane. Its function is as follows. Odorant receptor. This is Olfactory receptor 10T2 (OR10T2) from Homo sapiens (Human).